The chain runs to 213 residues: Small ribosomal subunit protein uS7 (213 aa).

The protein belongs to the universal ribosomal protein uS7 family. In terms of assembly, component of the small ribosomal subunit (SSU). Mature N.crassa ribosomes consist of a small (40S) and a large (60S) subunit. The 40S small subunit contains 1 molecule of ribosomal RNA (18S rRNA) and at least 32 different proteins. The large 60S subunit contains 3 rRNA molecules (26S, 5.8S and 5S rRNA) and at least 42 different proteins.

It is found in the cytoplasm. Its function is as follows. Component of the ribosome, a large ribonucleoprotein complex responsible for the synthesis of proteins in the cell. The small ribosomal subunit (SSU) binds messenger RNAs (mRNAs) and translates the encoded message by selecting cognate aminoacyl-transfer RNA (tRNA) molecules. The large subunit (LSU) contains the ribosomal catalytic site termed the peptidyl transferase center (PTC), which catalyzes the formation of peptide bonds, thereby polymerizing the amino acids delivered by tRNAs into a polypeptide chain. The nascent polypeptides leave the ribosome through a tunnel in the LSU and interact with protein factors that function in enzymatic processing, targeting, and the membrane insertion of nascent chains at the exit of the ribosomal tunnel. The protein is Small ribosomal subunit protein uS7 (rps-5) of Neurospora crassa (strain ATCC 24698 / 74-OR23-1A / CBS 708.71 / DSM 1257 / FGSC 987).